Reading from the N-terminus, the 426-residue chain is 3-phosphoshikimate 1-carboxyvinyltransferase (426 aa).

Residues K22, S23, and R27 each contribute to the 3-phosphoshikimate site. Phosphoenolpyruvate is bound at residue K22. Phosphoenolpyruvate-binding residues include G96 and R124. Residues S170, S171, Q172, S198, D314, N337, and K341 each coordinate 3-phosphoshikimate. Q172 is a binding site for phosphoenolpyruvate. Residue D314 is the Proton acceptor of the active site. Residues R345, R387, and K412 each contribute to the phosphoenolpyruvate site.

It belongs to the EPSP synthase family. As to quaternary structure, monomer.

Its subcellular location is the cytoplasm. It catalyses the reaction 3-phosphoshikimate + phosphoenolpyruvate = 5-O-(1-carboxyvinyl)-3-phosphoshikimate + phosphate. It functions in the pathway metabolic intermediate biosynthesis; chorismate biosynthesis; chorismate from D-erythrose 4-phosphate and phosphoenolpyruvate: step 6/7. In terms of biological role, catalyzes the transfer of the enolpyruvyl moiety of phosphoenolpyruvate (PEP) to the 5-hydroxyl of shikimate-3-phosphate (S3P) to produce enolpyruvyl shikimate-3-phosphate and inorganic phosphate. The sequence is that of 3-phosphoshikimate 1-carboxyvinyltransferase from Shewanella loihica (strain ATCC BAA-1088 / PV-4).